The sequence spans 87 residues: Phosphoribosyl-ATP pyrophosphatase (87 aa).

Belongs to the PRA-PH family.

Its subcellular location is the cytoplasm. It carries out the reaction 1-(5-phospho-beta-D-ribosyl)-ATP + H2O = 1-(5-phospho-beta-D-ribosyl)-5'-AMP + diphosphate + H(+). It participates in amino-acid biosynthesis; L-histidine biosynthesis; L-histidine from 5-phospho-alpha-D-ribose 1-diphosphate: step 2/9. This Bifidobacterium adolescentis (strain ATCC 15703 / DSM 20083 / NCTC 11814 / E194a) protein is Phosphoribosyl-ATP pyrophosphatase.